The chain runs to 364 residues: Alanine racemase (364 aa).

The active-site Proton acceptor; specific for D-alanine is lysine 34. Lysine 34 bears the N6-(pyridoxal phosphate)lysine mark. Position 129 (arginine 129) interacts with substrate. The Proton acceptor; specific for L-alanine role is filled by tyrosine 259. Residue methionine 307 participates in substrate binding.

The protein belongs to the alanine racemase family. It depends on pyridoxal 5'-phosphate as a cofactor.

The enzyme catalyses L-alanine = D-alanine. It functions in the pathway amino-acid biosynthesis; D-alanine biosynthesis; D-alanine from L-alanine: step 1/1. Its function is as follows. Catalyzes the interconversion of L-alanine and D-alanine. May also act on other amino acids. The sequence is that of Alanine racemase (alr) from Coxiella burnetii (strain RSA 331 / Henzerling II).